A 342-amino-acid polypeptide reads, in one-letter code: D-erythrose-4-phosphate dehydrogenase (342 aa).

12-13 (RI) serves as a coordination point for NAD(+). Residues 154–156 (SCT), R200, 213–214 (TK), and R236 each bind substrate. C155 acts as the Nucleophile in catalysis. N318 is a binding site for NAD(+).

Belongs to the glyceraldehyde-3-phosphate dehydrogenase family. Epd subfamily. Homotetramer.

The protein resides in the cytoplasm. The catalysed reaction is D-erythrose 4-phosphate + NAD(+) + H2O = 4-phospho-D-erythronate + NADH + 2 H(+). The protein operates within cofactor biosynthesis; pyridoxine 5'-phosphate biosynthesis; pyridoxine 5'-phosphate from D-erythrose 4-phosphate: step 1/5. In terms of biological role, catalyzes the NAD-dependent conversion of D-erythrose 4-phosphate to 4-phosphoerythronate. This is D-erythrose-4-phosphate dehydrogenase from Klebsiella pneumoniae subsp. pneumoniae (strain ATCC 700721 / MGH 78578).